The chain runs to 263 residues: Methylesterase 3 (263 aa).

S85 acts as the Acyl-ester intermediate in catalysis. Active-site charge relay system residues include D213 and H241.

It belongs to the AB hydrolase superfamily. Methylesterase family.

It catalyses the reaction methyl (indol-3-yl)acetate + H2O = (indol-3-yl)acetate + methanol + H(+). The catalysed reaction is methyl (-)-jasmonate + H2O = jasmonate + methanol + H(+). The protein operates within plant hormone biosynthesis. It participates in lipid metabolism; oxylipin biosynthesis. Functionally, methylesterase shown to have carboxylesterase activity, methyl indole-3-acetic acid (MeIAA) esterase activity and methyl jasmonate (MeJA) esterase activity in vitro. This chain is Methylesterase 3, found in Arabidopsis thaliana (Mouse-ear cress).